The chain runs to 51 residues: Large ribosomal subunit protein bL32c (51 aa).

The protein belongs to the bacterial ribosomal protein bL32 family.

Its subcellular location is the plastid. The protein resides in the chloroplast. The protein is Large ribosomal subunit protein bL32c of Oenothera elata subsp. hookeri (Hooker's evening primrose).